The sequence spans 364 residues: Chaperone protein DnaJ 1 (364 aa).

The region spanning 7-71 (DYYEILGVNR…ERRSEYDAIL (65 aa)) is the J domain. A CR-type zinc finger spans residues 124–200 (GCEKEIIYSR…CYGRGRVSAQ (77 aa)). Residues Cys-137, Cys-140, Cys-154, Cys-157, Cys-174, Cys-177, Cys-188, and Cys-191 each coordinate Zn(2+). 4 CXXCXGXG motif repeats span residues 137-144 (CPVCEGMG), 154-161 (CHACNGEG), 174-181 (CSVCKGKG), and 188-195 (CPTCYGRG).

This sequence belongs to the DnaJ family. As to quaternary structure, homodimer. Requires Zn(2+) as cofactor.

It localises to the cytoplasm. Its function is as follows. Participates actively in the response to hyperosmotic and heat shock by preventing the aggregation of stress-denatured proteins and by disaggregating proteins, also in an autonomous, DnaK-independent fashion. Unfolded proteins bind initially to DnaJ; upon interaction with the DnaJ-bound protein, DnaK hydrolyzes its bound ATP, resulting in the formation of a stable complex. GrpE releases ADP from DnaK; ATP binding to DnaK triggers the release of the substrate protein, thus completing the reaction cycle. Several rounds of ATP-dependent interactions between DnaJ, DnaK and GrpE are required for fully efficient folding. Also involved, together with DnaK and GrpE, in the DNA replication of plasmids through activation of initiation proteins. The chain is Chaperone protein DnaJ 1 from Aquifex aeolicus (strain VF5).